A 409-amino-acid chain; its full sequence is Peptidase T (409 aa).

Residue His80 participates in Zn(2+) binding. Asp82 is an active-site residue. Asp143 contributes to the Zn(2+) binding site. Residue Glu177 is the Proton acceptor of the active site. Residues Glu178, Asp200, and His382 each coordinate Zn(2+).

The protein belongs to the peptidase M20B family. Zn(2+) serves as cofactor.

It localises to the cytoplasm. It catalyses the reaction Release of the N-terminal residue from a tripeptide.. Its function is as follows. Cleaves the N-terminal amino acid of tripeptides. This is Peptidase T from Alkaliphilus oremlandii (strain OhILAs) (Clostridium oremlandii (strain OhILAs)).